The primary structure comprises 357 residues: uncharacterized protein (357 aa).

A Radical SAM core domain is found at 27-242 (HFGNTVTFER…VSSVRLNFPK (216 aa)). [4Fe-4S] cluster contacts are provided by Cys-44, Cys-50, and Cys-53.

The cofactor is [4Fe-4S] cluster.

This is an uncharacterized protein from Methanocaldococcus jannaschii (strain ATCC 43067 / DSM 2661 / JAL-1 / JCM 10045 / NBRC 100440) (Methanococcus jannaschii).